Consider the following 87-residue polypeptide: Small ribosomal subunit protein bS20 (87 aa).

The tract at residues 1–20 is disordered; the sequence is MANIKSQIKRNKTNEKARLR.

It belongs to the bacterial ribosomal protein bS20 family.

Its function is as follows. Binds directly to 16S ribosomal RNA. This chain is Small ribosomal subunit protein bS20, found in Corynebacterium efficiens (strain DSM 44549 / YS-314 / AJ 12310 / JCM 11189 / NBRC 100395).